The primary structure comprises 432 residues: Protein distal antenna-related (432 aa).

Residues 15-66 form the HTH psq-type domain; the sequence is TRGKRPLRNLTPNDKVRAIQRIHNGETKASVSRDLGVPESTLRGWCKNEQKL. A DNA-binding region (H-T-H motif) is located at residues 42–62; it reads KASVSRDLGVPESTLRGWCKN. 2 disordered regions span residues 195–221 and 401–432; these read ESAD…NSTK and SCAS…DGEQ. 2 stretches are compositionally biased toward polar residues: residues 202–211 and 401–425; these read KSPQSTTDIT and SCAS…TSIA.

As to quaternary structure, interacts with itself, dan, ey and dac to form a complex (or complexes) containing the RD factors.

The protein localises to the nucleus. Its function is as follows. Probable transcription factor with a role in the retinal determination (RD) network. Regulates ato expression and is required for normal R8 induction and differentiation. Danr appears to repress Dan expression, but Dan is required for Danr expression anterior to the morphogenetic furrow (MF). Dan and Danr lie downstream of so and require dac function for highest levels of expression. Contributes to differentiation of antenna-specific characteristics; effector gene that acts downstream of homothorax (hth), Distal-less (Dll), cut (ct) and spineless (ss) genes to control differentiation of distal antennal structures. In Drosophila pseudoobscura pseudoobscura (Fruit fly), this protein is Protein distal antenna-related.